A 232-amino-acid chain; its full sequence is Ribonuclease P protein component 3 (232 aa).

This sequence belongs to the eukaryotic/archaeal RNase P protein component 3 family. Consists of a catalytic RNA component and at least 4-5 protein subunits.

Its subcellular location is the cytoplasm. It carries out the reaction Endonucleolytic cleavage of RNA, removing 5'-extranucleotides from tRNA precursor.. Part of ribonuclease P, a protein complex that generates mature tRNA molecules by cleaving their 5'-ends. In Methanococcus maripaludis (strain C6 / ATCC BAA-1332), this protein is Ribonuclease P protein component 3.